The sequence spans 298 residues: N-acetylmuramic acid 6-phosphate etherase (298 aa).

An SIS domain is found at 55 to 218; the sequence is IHTQVSGGGR…STGLMIKSGK (164 aa). Glu83 functions as the Proton donor in the catalytic mechanism. Residue Glu114 is part of the active site.

It belongs to the GCKR-like family. MurNAc-6-P etherase subfamily. Homodimer.

It carries out the reaction N-acetyl-D-muramate 6-phosphate + H2O = N-acetyl-D-glucosamine 6-phosphate + (R)-lactate. Its pathway is amino-sugar metabolism; 1,6-anhydro-N-acetylmuramate degradation. It functions in the pathway amino-sugar metabolism; N-acetylmuramate degradation. It participates in cell wall biogenesis; peptidoglycan recycling. In terms of biological role, specifically catalyzes the cleavage of the D-lactyl ether substituent of MurNAc 6-phosphate, producing GlcNAc 6-phosphate and D-lactate. Together with AnmK, is also required for the utilization of anhydro-N-acetylmuramic acid (anhMurNAc) either imported from the medium or derived from its own cell wall murein, and thus plays a role in cell wall recycling. The polypeptide is N-acetylmuramic acid 6-phosphate etherase (Escherichia coli O6:K15:H31 (strain 536 / UPEC)).